Here is a 347-residue protein sequence, read N- to C-terminus: MANIQGGQQIGTNQGKGQSAADKLALFLKVFGGEVLTAFARTSVTMPRHMLRSIASGKSAQFPVIGRTKAAYLKPGENLDDKRKDIKHTEKVIHIDGLLTADVLIYDIEDAMNHYDVRAEYTAQLGESLAMAADGAVLAELAGLVNLPDGSNENIEGLGKPTVLTLVKPTTGSLTDPVELGKAIIAQLTIARASLTKNYVPAADRTFYTTPDNYSAILAALMPNAANYQALLDPERGTIRNVMGFEVVEVPHLTAGGAGDTREDAPADQKHAFPATSSTTVKVALDNVVGLFQHRSAVGTVKLKDLALERARRANYQADQIIAKYAMGHGGLRPEAAGAIVLPKVSE.

It belongs to the T7virus major capsid protein family. As to quaternary structure, homohexamer. Interacts with the connector protein and the minor capsid protein. Interacts with the capsid assembly scaffolding protein; capsid proteins and scaffolding proteins form building blocks that assemble to form the procapsid, each hexamer of the major capsid protein interacting with 2 scaffolding proteins.

It localises to the virion. Its function is as follows. Assembles with the minor capsid protein to form an icosahedral capsid with a T=7 symmetry, about 60 nm in diameter, and consisting of 415 capsid proteins. The major and minor capsid proteins are incorporated into the capsid in about a 90/10 ratio respectively. Once the capsid formed, encapsidates one single copy of the viral genome. In Escherichia coli (Bacteriophage T3), this protein is Major capsid protein (10).